The following is a 70-amino-acid chain: Peptide Hp1035 (70 aa).

An N-terminal signal peptide occupies residues 1 to 23; the sequence is MKTQFVILLVALVLFQMFAQSEA. F36 carries the phenylalanine amide modification. Positions 40 to 70 are excised as a propeptide; it reads GLQDLDMDDLDQLFDGEISQADINFLNQLMR.

Belongs to the non-disulfide-bridged peptide (NDBP) superfamily. Short antimicrobial peptide (group 4) family. As to expression, expressed by the venom gland.

It is found in the secreted. It localises to the target cell membrane. Its function is as follows. Amphipathic peptide with antimicrobial activity. This Heterometrus petersii (Asian forest scorpion) protein is Peptide Hp1035.